Here is a 654-residue protein sequence, read N- to C-terminus: Biotin-dependent 3-methylcrotonyl-coenzyme A carboxylase alpha1 subunit (654 aa).

Residues 1–448 (MFDTVLVANR…DTAVLDERSA (448 aa)) enclose the Biotin carboxylation domain. An ATP-grasp domain is found at 120–319 (KNAVAAFDVP…LVEWQLRVGA (200 aa)). 148–209 (AAEVGYPVLI…ERFVLRPRHI (62 aa)) contributes to the ATP binding site. The Mg(2+) site is built by Glu275, Glu290, and Asn292. Residues Glu275, Glu290, and Asn292 each contribute to the Mn(2+) site. The Biotinyl-binding domain occupies 578–653 (HRAVGARPAE…KVEQVLARIK (76 aa)). At Lys620 the chain carries N6-biotinyllysine.

In terms of assembly, the biotin-dependent acyl-CoA carboxylase complex is composed of AccA1, which contains the biotin carboxylase (BC) and biotin carboxyl carrier protein (BCCP) domains, and AccD1, which contains the carboxyl transferase (CT) domain. The AccA1/AccD1 complex forms a dodecamer. Mg(2+) serves as cofactor. It depends on Mn(2+) as a cofactor. Biotin is required as a cofactor.

The enzyme catalyses N(6)-biotinyl-L-lysyl-[protein] + hydrogencarbonate + ATP = N(6)-carboxybiotinyl-L-lysyl-[protein] + ADP + phosphate + H(+). It functions in the pathway amino-acid degradation; L-leucine degradation. Component of a biotin-dependent acyl-CoA carboxylase complex. This subunit catalyzes the ATP-dependent carboxylation of the biotin carried by the biotin carboxyl carrier (BCC) domain, resulting in the formation of carboxyl biotin. When associated with the beta1 subunit AccD1, is involved in branched amino-acid catabolism with methylcrotonyl coenzyme A as the substrate. In Mycobacterium bovis (strain ATCC BAA-935 / AF2122/97), this protein is Biotin-dependent 3-methylcrotonyl-coenzyme A carboxylase alpha1 subunit (accA1).